The chain runs to 334 residues: Ribosomal RNA small subunit methyltransferase H (334 aa).

A disordered region spans residues 1–21 (MNALPIRTAAPSGHSGGHSST). Residues 52-54 (GGY), Asp-71, Phe-98, Asp-119, and Gln-126 contribute to the S-adenosyl-L-methionine site.

The protein belongs to the methyltransferase superfamily. RsmH family.

Its subcellular location is the cytoplasm. It carries out the reaction cytidine(1402) in 16S rRNA + S-adenosyl-L-methionine = N(4)-methylcytidine(1402) in 16S rRNA + S-adenosyl-L-homocysteine + H(+). Functionally, specifically methylates the N4 position of cytidine in position 1402 (C1402) of 16S rRNA. This is Ribosomal RNA small subunit methyltransferase H from Granulibacter bethesdensis (strain ATCC BAA-1260 / CGDNIH1).